The primary structure comprises 248 residues: DNA repair protein RecO (248 aa).

The protein belongs to the RecO family.

Involved in DNA repair and RecF pathway recombination. This is DNA repair protein RecO from Bartonella tribocorum (strain CIP 105476 / IBS 506).